A 631-amino-acid chain; its full sequence is Phosphomethylpyrimidine synthase (631 aa).

Residues Asn239, Met268, Tyr297, His333, 353–355 (SRG), 394–397 (DGLR), and Glu433 each bind substrate. Zn(2+) is bound at residue His437. Residue Tyr460 coordinates substrate. His501 contributes to the Zn(2+) binding site. Residues Cys581, Cys584, and Cys589 each contribute to the [4Fe-4S] cluster site.

The protein belongs to the ThiC family. As to quaternary structure, homodimer. The cofactor is [4Fe-4S] cluster.

The catalysed reaction is 5-amino-1-(5-phospho-beta-D-ribosyl)imidazole + S-adenosyl-L-methionine = 4-amino-2-methyl-5-(phosphooxymethyl)pyrimidine + CO + 5'-deoxyadenosine + formate + L-methionine + 3 H(+). The protein operates within cofactor biosynthesis; thiamine diphosphate biosynthesis. Functionally, catalyzes the synthesis of the hydroxymethylpyrimidine phosphate (HMP-P) moiety of thiamine from aminoimidazole ribotide (AIR) in a radical S-adenosyl-L-methionine (SAM)-dependent reaction. The chain is Phosphomethylpyrimidine synthase from Escherichia coli O157:H7.